Consider the following 80-residue polypeptide: Acyl carrier protein (80 aa).

Residues Asp-4–Lys-79 form the Carrier domain. At Ser-39 the chain carries O-(pantetheine 4'-phosphoryl)serine.

The protein belongs to the acyl carrier protein (ACP) family. Post-translationally, 4'-phosphopantetheine is transferred from CoA to a specific serine of apo-ACP by AcpS. This modification is essential for activity because fatty acids are bound in thioester linkage to the sulfhydryl of the prosthetic group.

It is found in the cytoplasm. Its pathway is lipid metabolism; fatty acid biosynthesis. Carrier of the growing fatty acid chain in fatty acid biosynthesis. In Borrelia garinii subsp. bavariensis (strain ATCC BAA-2496 / DSM 23469 / PBi) (Borreliella bavariensis), this protein is Acyl carrier protein.